The primary structure comprises 330 residues: uncharacterized protein (330 aa).

Positions 4-242 (LSIQNLVVEY…AGEVLFEQST (239 aa)) constitute an ABC transporter domain. 40–47 (GPSGCGKT) lines the ATP pocket. 210–330 (DRVVELTPDF…LIEHRALAND (121 aa)) contacts a nucleoside 3',5'-cyclic phosphate.

This sequence belongs to the ABC transporter superfamily. In terms of assembly, the complex is composed of two ATP-binding proteins (MT0079), two transmembrane proteins (MT0078) and a solute-binding protein.

Probably part of an ABC transporter complex. Probably responsible for energy coupling to the transport system. This is an uncharacterized protein from Mycobacterium tuberculosis (strain CDC 1551 / Oshkosh).